The chain runs to 205 residues: Heme ligase (205 aa).

Residues Lys-48–Ile-203 enclose the FAS1 domain. A required for binding to host hemoglobin region spans residues Leu-154–His-172. Heme binding domain regions lie at residues Lys-171–Gly-181 and Cys-191–Asp-200.

In terms of assembly, component of the hemozoin formation complex (HFC) composed of falcipains FP2A and/or FP2B, plasmepsins PMII, PMIII/HAP and PMIV, heme detoxifying protein HDP and falcilysin FLN. The HFC complex is involved in hemoglobin degradation and detoxification of heme in the food vacuole during the asexual blood stage. Interacts with falcipain 2; the interaction is direct and enhances HDP catalytic activity. Interacts with host hemoglobin.

It localises to the vacuole. The protein resides in the host cytoplasm. It is found in the host cytosol. It catalyses the reaction 2 Fe(III)-heme b = beta-hematin. Functionally, heme detoxifying enzyme that converts heme to crystalline hemozoin (beta-hematin) to protect the organism from the toxic effects of heme. During its development, P.falciparum proteolyzes vast amounts of host hemoglobin, leading to heme release. The chain is Heme ligase from Plasmodium falciparum (isolate 3D7).